The following is a 90-amino-acid chain: NAD(P)H-quinone oxidoreductase subunit H, chloroplastic (90 aa).

This sequence belongs to the complex I 49 kDa subunit family. As to quaternary structure, NDH is composed of at least 16 different subunits, 5 of which are encoded in the nucleus.

The protein resides in the plastid. The protein localises to the chloroplast thylakoid membrane. It carries out the reaction a plastoquinone + NADH + (n+1) H(+)(in) = a plastoquinol + NAD(+) + n H(+)(out). The catalysed reaction is a plastoquinone + NADPH + (n+1) H(+)(in) = a plastoquinol + NADP(+) + n H(+)(out). Its function is as follows. NDH shuttles electrons from NAD(P)H:plastoquinone, via FMN and iron-sulfur (Fe-S) centers, to quinones in the photosynthetic chain and possibly in a chloroplast respiratory chain. The immediate electron acceptor for the enzyme in this species is believed to be plastoquinone. Couples the redox reaction to proton translocation, and thus conserves the redox energy in a proton gradient. The polypeptide is NAD(P)H-quinone oxidoreductase subunit H, chloroplastic (ndhH) (Secale cereale (Rye)).